A 106-amino-acid chain; its full sequence is Protein RnfH (106 aa).

It belongs to the UPF0125 (RnfH) family.

This is Protein RnfH from Ectopseudomonas mendocina (strain ymp) (Pseudomonas mendocina).